The primary structure comprises 399 residues: Chaperone protein DnaJ 1 (399 aa).

The region spanning 10-75 (DYYKVLGVPK…KKRKEYDEAR (66 aa)) is the J domain. A CR-type zinc finger spans residues 166–244 (GATVPLRMSS…CKGSGRAKSS (79 aa)). 8 residues coordinate Zn(2+): Cys179, Cys182, Cys195, Cys198, Cys218, Cys221, Cys232, and Cys235. CXXCXGXG motif repeat units lie at residues 179–186 (CKACSGTG), 195–202 (CPTCVGTG), 218–225 (CPDCKGRG), and 232–239 (CEVCKGSG).

It belongs to the DnaJ family. As to quaternary structure, homodimer. Zn(2+) serves as cofactor.

It localises to the cytoplasm. Participates actively in the response to hyperosmotic and heat shock by preventing the aggregation of stress-denatured proteins and by disaggregating proteins, also in an autonomous, DnaK-independent fashion. Unfolded proteins bind initially to DnaJ; upon interaction with the DnaJ-bound protein, DnaK hydrolyzes its bound ATP, resulting in the formation of a stable complex. GrpE releases ADP from DnaK; ATP binding to DnaK triggers the release of the substrate protein, thus completing the reaction cycle. Several rounds of ATP-dependent interactions between DnaJ, DnaK and GrpE are required for fully efficient folding. Also involved, together with DnaK and GrpE, in the DNA replication of plasmids through activation of initiation proteins. The chain is Chaperone protein DnaJ 1 from Streptomyces coelicolor (strain ATCC BAA-471 / A3(2) / M145).